Here is a 375-residue protein sequence, read N- to C-terminus: Phytanoyl-CoA hydroxylase-interacting protein-like (375 aa).

A phosphoserine mark is found at Ser-11, Ser-12, and Ser-15. Asn-22 is a glycosylation site (N-linked (GlcNAc...) asparagine). Position 24 is a phosphoserine (Ser-24). Asn-36 carries N-linked (GlcNAc...) asparagine glycosylation. Positions Val-51–Tyr-160 constitute a Fibronectin type-III domain.

The protein belongs to the PHYHIP family.

May play a role in the development of the central system. This Rattus norvegicus (Rat) protein is Phytanoyl-CoA hydroxylase-interacting protein-like (Phyhipl).